The sequence spans 45 residues: Photosystem II reaction center protein K (45 aa).

A propeptide spanning residues 1 to 8 (METALLLA) is cleaved from the precursor. A helical transmembrane segment spans residues 24–44 (LPLIPLFFLLLAFVWQASVGF).

Belongs to the PsbK family. PSII is composed of 1 copy each of membrane proteins PsbA, PsbB, PsbC, PsbD, PsbE, PsbF, PsbH, PsbI, PsbJ, PsbK, PsbL, PsbM, PsbT, PsbX, PsbY, PsbZ, Psb30/Ycf12, peripheral proteins PsbO, CyanoQ (PsbQ), PsbU, PsbV and a large number of cofactors. It forms dimeric complexes.

It localises to the cellular thylakoid membrane. Its function is as follows. One of the components of the core complex of photosystem II (PSII). PSII is a light-driven water:plastoquinone oxidoreductase that uses light energy to abstract electrons from H(2)O, generating O(2) and a proton gradient subsequently used for ATP formation. It consists of a core antenna complex that captures photons, and an electron transfer chain that converts photonic excitation into a charge separation. This is Photosystem II reaction center protein K from Microcystis aeruginosa (strain NIES-843 / IAM M-2473).